A 90-amino-acid chain; its full sequence is Serine protease inhibitor kazal-like protein, minor form (90 aa).

Positions Met-1–Ser-23 are cleaved as a signal peptide. The Kazal-like domain maps to Val-33–Tyr-89. N-linked (GlcNAc...) asparagine glycosylation is present at Asn-38.

In terms of tissue distribution, luminal fluid and mucosal folds of the seminal vesicles (at protein level). Not detected in brain, heart, lung, liver, kidney, stomach, small intestine, muscle, skin, thymus, placenta or bladder.

Its subcellular location is the secreted. In terms of biological role, does not function as an inhibitor of trypsin, chymotrypsin, subtilisin or elastase. Binds sperm and enhances sperm motility. May act as a decapacitation factor, suppresses BSA-stimulated sperm capacitation and blocks sperm-oocyte interactions in vitro. This is Serine protease inhibitor kazal-like protein, minor form (Spinkl) from Mus musculus (Mouse).